Reading from the N-terminus, the 333-residue chain is Heat shock transcription factor, X-linked member 3 (333 aa).

The disordered stretch occupies residues Met-1–Asn-66. The segment covering Gly-29 to Ser-39 has biased composition (low complexity). Residues Ala-49–Ser-60 are compositionally biased toward polar residues. Residues Phe-79–Lys-182 mediate DNA binding. The segment at Gln-227–Gly-275 is disordered. The segment covering Gly-228–Arg-242 has biased composition (polar residues).

The protein belongs to the HSF family.

It is found in the nucleus. This Homo sapiens (Human) protein is Heat shock transcription factor, X-linked member 3.